Here is a 355-residue protein sequence, read N- to C-terminus: Anthranilate phosphoribosyltransferase (355 aa).

5-phospho-alpha-D-ribose 1-diphosphate contacts are provided by residues Gly-99, 102 to 103 (GD), Thr-107, 109 to 112 (NIST), 127 to 135 (KHGNRSVSS), and Ser-139. Gly-99 provides a ligand contact to anthranilate. Position 111 (Ser-111) interacts with Mg(2+). Asn-130 is a binding site for anthranilate. Arg-185 contributes to the anthranilate binding site. The Mg(2+) site is built by Asp-243 and Glu-244.

It belongs to the anthranilate phosphoribosyltransferase family. Homodimer. Mg(2+) is required as a cofactor.

The catalysed reaction is N-(5-phospho-beta-D-ribosyl)anthranilate + diphosphate = 5-phospho-alpha-D-ribose 1-diphosphate + anthranilate. It participates in amino-acid biosynthesis; L-tryptophan biosynthesis; L-tryptophan from chorismate: step 2/5. Functionally, catalyzes the transfer of the phosphoribosyl group of 5-phosphorylribose-1-pyrophosphate (PRPP) to anthranilate to yield N-(5'-phosphoribosyl)-anthranilate (PRA). The sequence is that of Anthranilate phosphoribosyltransferase from Pseudoalteromonas translucida (strain TAC 125).